The primary structure comprises 130 residues: Glutamate-rich protein 4 (130 aa).

Acidic residues predominate over residues Glu-91–Gln-104. The tract at residues Glu-91–Ile-130 is disordered. The segment covering Glu-105–Glu-116 has biased composition (basic and acidic residues).

This is Glutamate-rich protein 4 (ERICH4) from Homo sapiens (Human).